We begin with the raw amino-acid sequence, 57 residues long: uncharacterized protein (57 aa).

This is an uncharacterized protein from Bacillus subtilis (strain 168).